A 143-amino-acid chain; its full sequence is Small ribosomal subunit protein uS11c (143 aa).

This sequence belongs to the universal ribosomal protein uS11 family. Part of the 30S ribosomal subunit.

Its subcellular location is the plastid. The protein localises to the chloroplast. The chain is Small ribosomal subunit protein uS11c from Saccharum officinarum (Sugarcane).